A 189-amino-acid polypeptide reads, in one-letter code: Segregation and condensation protein B (189 aa).

The protein belongs to the ScpB family. Homodimer. Homodimerization may be required to stabilize the binding of ScpA to the Smc head domains. Component of a cohesin-like complex composed of ScpA, ScpB and the Smc homodimer, in which ScpA and ScpB bind to the head domain of Smc. The presence of the three proteins is required for the association of the complex with DNA.

The protein localises to the cytoplasm. Functionally, participates in chromosomal partition during cell division. May act via the formation of a condensin-like complex containing Smc and ScpA that pull DNA away from mid-cell into both cell halves. In Clostridium tetani (strain Massachusetts / E88), this protein is Segregation and condensation protein B.